Consider the following 283-residue polypeptide: ATP phosphoribosyltransferase (283 aa).

The protein belongs to the ATP phosphoribosyltransferase family. Long subfamily. As to quaternary structure, equilibrium between an active dimeric form, an inactive hexameric form and higher aggregates. Interconversion between the various forms is largely reversible and is influenced by the natural substrates and inhibitors of the enzyme. It depends on Mg(2+) as a cofactor.

The protein resides in the cytoplasm. The catalysed reaction is 1-(5-phospho-beta-D-ribosyl)-ATP + diphosphate = 5-phospho-alpha-D-ribose 1-diphosphate + ATP. It functions in the pathway amino-acid biosynthesis; L-histidine biosynthesis; L-histidine from 5-phospho-alpha-D-ribose 1-diphosphate: step 1/9. Its activity is regulated as follows. Feedback inhibited by histidine. Functionally, catalyzes the condensation of ATP and 5-phosphoribose 1-diphosphate to form N'-(5'-phosphoribosyl)-ATP (PR-ATP). Has a crucial role in the pathway because the rate of histidine biosynthesis seems to be controlled primarily by regulation of HisG enzymatic activity. The polypeptide is ATP phosphoribosyltransferase (Mycobacterium sp. (strain JLS)).